Here is a 717-residue protein sequence, read N- to C-terminus: Inhibitor of nuclear factor kappa-B kinase subunit epsilon (717 aa).

One can recognise a Protein kinase domain in the interval 9 to 315; it reads WHTDDLLGQG…LQRTVIHVFS (307 aa). An ATP-binding site is contributed by 15–23; sequence LGQGATASV. Lysine 30 is covalently cross-linked (Glycyl lysine isopeptide (Lys-Gly) (interchain with G-Cter in ubiquitin)). Lysine 38 serves as a coordination point for ATP. Aspartate 135 (proton acceptor) is an active-site residue. Serine 172 carries the phosphoserine; by autocatalysis and IKKB modification. Lysine 231 is covalently cross-linked (Glycyl lysine isopeptide (Lys-Gly) (interchain with G-Cter in SUMO1)). Positions 385-650 are interaction with DDX3X; that stretch reads SSDTPKGLAF…AQESLNKIFD (266 aa). Lysine 403 is covalently cross-linked (Glycyl lysine isopeptide (Lys-Gly) (interchain with G-Cter in ubiquitin)). The tract at residues 452–473 is leucine-zipper; the sequence is LQDTCQQTLEVTRTALLYLSSS. Threonine 503 is subject to Phosphothreonine. Serine 665 is modified (phosphoserine).

It belongs to the protein kinase superfamily. Ser/Thr protein kinase family. I-kappa-B kinase subfamily. As to quaternary structure, homodimer. Interacts with MAVS/IPS1. Interacts (via protein kinase domain) with TTLL12 (via N-terminus); the interaction prevents MAVS binding to IKBKE. Interacts with the adapter proteins AZI2/NAP1, TANK and TBKBP1/SINTBAD. Interacts with SIKE1. Interacts with TICAM1/TRIF, IRF3 and RIGI; interactions are disrupted by the interaction between IKBKE and SIKE1. Interacts with TOPORS; induced by DNA damage. Interacts with CYLD, IKBKB, IKBKG and MYD88. Interacts with IFIH1. Interacts with DDX3X; the interaction may be induced upon virus infection. Interacts with TRIM6 (via SPRY box). Interacts with unanchored K48-linked polyubiquitin chains; this leads to IKBKE activation. Interacts with TBK1. Interacts with FKBP5. Sumoylation by TOPORS upon DNA damage is required for protection of cells against DNA damage-induced cell death. Desumoylated by SENP1. In terms of processing, autophosphorylated and phosphorylated by IKBKB/IKKB. Phosphorylation at Ser-172 is enhanced by the interaction with DDX3X. Phosphorylated at Thr-503 upon IFN activation. Post-translationally, 'Lys-63'-linked polyubiquitinated at Lys-30 and Lys-403 by TRAF2:BIRC2 and TRAF2:BIRC3 complexes. Ubiquitination is induced by LPS, TNFA and interleukin-1 and required for full kinase activity and KF-kappa-B pathway activation. Expressed in bone marrow-derived macrophages and at low levels in liver and white adipose tissue (at protein level). Detected in muscle and lung.

It localises to the cytoplasm. It is found in the nucleus. The protein localises to the PML body. It catalyses the reaction L-seryl-[I-kappa-B protein] + ATP = O-phospho-L-seryl-[I-kappa-B protein] + ADP + H(+). Its activity is regulated as follows. Kinase activity is inhibited competitively by amlexanox. Its function is as follows. Serine/threonine kinase that plays an essential role in regulating inflammatory responses to viral infection, through the activation of the type I IFN, NF-kappa-B and STAT signaling. Also involved in TNFA and inflammatory cytokines, like Interleukin-1, signaling. Following activation of viral RNA sensors, such as RIG-I-like receptors, associates with DDX3X and phosphorylates interferon regulatory factors (IRFs), IRF3 and IRF7, as well as DDX3X. This activity allows subsequent homodimerization and nuclear translocation of the IRF3 leading to transcriptional activation of pro-inflammatory and antiviral genes including IFNB. In order to establish such an antiviral state, IKBKE forms several different complexes whose composition depends on the type of cell and cellular stimuli. Thus, several scaffolding molecules including IPS1/MAVS, TANK, AZI2/NAP1 or TBKBP1/SINTBAD can be recruited to the IKBKE-containing-complexes. Activated by polyubiquitination in response to TNFA and interleukin-1, regulates the NF-kappa-B signaling pathway through, at least, the phosphorylation of CYLD. Phosphorylates inhibitors of NF-kappa-B thus leading to the dissociation of the inhibitor/NF-kappa-B complex and ultimately the degradation of the inhibitor. In addition, is also required for the induction of a subset of ISGs which displays antiviral activity, may be through the phosphorylation of STAT1 at 'Ser-708'. Phosphorylation of STAT1 at 'Ser-708' also seems to promote the assembly and DNA binding of ISGF3 (STAT1:STAT2:IRF9) complexes compared to GAF (STAT1:STAT1) complexes, in this way regulating the balance between type I and type II IFN responses. Protects cells against DNA damage-induced cell death. Also plays an important role in energy balance regulation by sustaining a state of chronic, low-grade inflammation in obesity, wich leads to a negative impact on insulin sensitivity. Phosphorylates AKT1. The chain is Inhibitor of nuclear factor kappa-B kinase subunit epsilon (Ikbke) from Mus musculus (Mouse).